The sequence spans 228 residues: Aldehyde dehydrogenase 9 (228 aa).

G76–A81 lines the NAD(+) pocket. Active-site residues include E99 and C132.

The protein belongs to the aldehyde dehydrogenase family.

It carries out the reaction an aldehyde + NAD(+) + H2O = a carboxylate + NADH + 2 H(+). The protein operates within alcohol metabolism; ethanol degradation; acetate from ethanol: step 2/2. This Polyandrocarpa misakiensis (Tunicate) protein is Aldehyde dehydrogenase 9 (ALDH9).